Here is a 233-residue protein sequence, read N- to C-terminus: ATP synthase subunit C lysine N-methyltransferase (233 aa).

An N-acetylmethionine modification is found at Met1. A helical membrane pass occupies residues 38–58; it reads FLLTGLVGGTLVAVYAVATPF. A required for mitochondrial location region spans residues 56 to 90; the sequence is TPFVTPALRKVCLPFVPATTKQIENVVKMLRCRRG.

This sequence belongs to the ANT/ATPSC lysine N-methyltransferase family. In terms of tissue distribution, ubiquitously expressed.

It is found in the mitochondrion membrane. It catalyses the reaction L-lysyl-[protein] + 3 S-adenosyl-L-methionine = N(6),N(6),N(6)-trimethyl-L-lysyl-[protein] + 3 S-adenosyl-L-homocysteine + 3 H(+). Functionally, mitochondrial protein-lysine N-methyltransferase that trimethylates ATP synthase subunit C, ATP5MC1 and ATP5MC2. Trimethylation is required for proper incorporation of the C subunit into the ATP synthase complex and mitochondrial respiration. Promotes chronic pain. Involved in persistent inflammatory and neuropathic pain: methyltransferase activity in the mitochondria of sensory neurons promotes chronic pain via a pathway that depends on the production of reactive oxygen species (ROS) and on the engagement of spinal cord microglia. The chain is ATP synthase subunit C lysine N-methyltransferase from Homo sapiens (Human).